We begin with the raw amino-acid sequence, 745 residues long: Serine/threonine-protein kinase BUR1 (745 aa).

Residues 1 to 21 (MSVIAGHHVPRSNDQRQYDTP) form a disordered region. Positions 44–349 (YEVIEKLGQG…ALDALNHKFF (306 aa)) constitute a Protein kinase domain. Residues 50-58 (LGQGTFGVV) and lysine 73 contribute to the ATP site. The active-site Proton acceptor is aspartate 179. Basic and acidic residues-rich tracts occupy residues 380-406 (DKEQ…RYNA), 428-475 (DYID…DIQN), and 493-508 (KLRE…KKYD). Residues 380–701 (DKEQAVSELK…EVSDLEEDSD (322 aa)) form a disordered region. Over residues 516–534 (SRGSKSPSPSKLSSISQSK) the composition is skewed to low complexity. Over residues 547–557 (ASRESSLERKQ) the composition is skewed to basic and acidic residues. Polar residues-rich tracts occupy residues 558–567 (VSNGIRTTTD) and 586–598 (LTSN…PTRN). Basic and acidic residues predominate over residues 599–631 (KSVERPKDLEKPTNGVTEDRNKKPVLEEKKEVV). Residues 632 to 660 (KPNLAIPKIKKSSSLVSLSSRSSTTPVIS) show a composition bias toward low complexity. Residues 661–674 (NPSKVTKRAASSVT) show a composition bias toward polar residues. Residues 692–701 (EVSDLEEDSD) are compositionally biased toward acidic residues.

It belongs to the protein kinase superfamily. CMGC Ser/Thr protein kinase family. CDC2/CDKX subfamily.

Its subcellular location is the nucleus. It carries out the reaction L-seryl-[protein] + ATP = O-phospho-L-seryl-[protein] + ADP + H(+). The catalysed reaction is L-threonyl-[protein] + ATP = O-phospho-L-threonyl-[protein] + ADP + H(+). The enzyme catalyses [DNA-directed RNA polymerase] + ATP = phospho-[DNA-directed RNA polymerase] + ADP + H(+). Functionally, serine/threonine-protein kinase involved in transcription regulation. Phosphorylates the UBC2/RAD6 ubiquitin-conjugating enzyme (E2), leading to monoubiquitination of histone H2B and the silencing of telomeric-associated genes. Also required for histone H3 methylation. Necessary for the recovery from pheromone-induced growth arrest in the cell cycle G1 phase. Required for pseudohyphal growth and virulence in mice. This Candida albicans (strain SC5314 / ATCC MYA-2876) (Yeast) protein is Serine/threonine-protein kinase BUR1 (CRK1).